Here is a 343-residue protein sequence, read N- to C-terminus: Isopentenyl-diphosphate delta-isomerase (343 aa).

9-10 (RK) contributes to the substrate binding site. FMN is bound by residues Ser-67, 68–70 (AMT), Ser-98, and Asn-127. 98–100 (SQR) contacts substrate. Gln-162 is a substrate binding site. Residue Glu-163 coordinates Mg(2+). FMN contacts are provided by residues Lys-194, Thr-224, 273-275 (GVR), and 294-295 (AA).

This sequence belongs to the IPP isomerase type 2 family. As to quaternary structure, homooctamer. Dimer of tetramers. The cofactor is FMN. NADPH serves as cofactor. Mg(2+) is required as a cofactor.

It is found in the cytoplasm. The enzyme catalyses isopentenyl diphosphate = dimethylallyl diphosphate. In terms of biological role, involved in the biosynthesis of isoprenoids. Catalyzes the 1,3-allylic rearrangement of the homoallylic substrate isopentenyl (IPP) to its allylic isomer, dimethylallyl diphosphate (DMAPP). In Xanthobacter autotrophicus (strain ATCC BAA-1158 / Py2), this protein is Isopentenyl-diphosphate delta-isomerase.